A 206-amino-acid chain; its full sequence is dCTP deaminase, dUMP-forming (206 aa).

Residues 117 to 122 (RSSFGR), Asp-135, 143 to 145 (TLE), Gln-163, Tyr-177, Lys-184, and Gln-188 each bind dCTP. Glu-145 (proton donor/acceptor) is an active-site residue.

This sequence belongs to the dCTP deaminase family. Homotrimer.

It catalyses the reaction dCTP + 2 H2O = dUMP + NH4(+) + diphosphate. It participates in pyrimidine metabolism; dUMP biosynthesis; dUMP from dCTP: step 1/1. Its function is as follows. Bifunctional enzyme that catalyzes both the deamination of dCTP to dUTP and the hydrolysis of dUTP to dUMP without releasing the toxic dUTP intermediate. This Methanococcus vannielii (strain ATCC 35089 / DSM 1224 / JCM 13029 / OCM 148 / SB) protein is dCTP deaminase, dUMP-forming.